A 378-amino-acid chain; its full sequence is Trans-enoyl reductase poxP (378 aa).

Residue Cys62–Lys65 participates in NADP(+) binding. Substrate is bound at residue Ser151 to Ile158. NADP(+) is bound by residues Ser187–Thr190, Ser210–Asn213, Tyr228, and Leu275–Glu276. Gly295–Ser299 contributes to the substrate binding site. Position 364–365 (Thr364–Ser365) interacts with NADP(+).

The protein belongs to the zinc-containing alcohol dehydrogenase family. As to quaternary structure, monomer.

It functions in the pathway secondary metabolite biosynthesis. Trans-enoyl reductase; part of the gene cluster that mediates the biosynthesis of oxaleimides, cytotoxic compounds containing an unusual disubstituted succinimide moiety. The first step of the pathway is provided by the HR-PKS poxF that serves in a new mode of collaborative biosynthesis with the PKS-NRPS poxE, by providing the olefin containing amino acid substrate via the synthesis of an ACP-bound dec-4-enoate. The cytochrome P450 monooxygenase poxM-catalyzed oxidation at the alpha-position creates the enzyme-bound 2-hydroxydec-4-enoyl-ACP thioester, which may be prone to spontaneous hydrolysis to yield 2-hydroxydec-4-enoic acid due to increased electrophilicity of the carbonyl. 2-hydroxydec-4-enoic acid can then be further oxidized by poxM to yield the alpha-ketoacid 2-oxodec-4-enoicacid, which is reductively aminated by the aminotransferase poxL to yield (S,E)-2-aminodec-4-enoic acid. The Hybrid PKS-NRPS synthetase poxE then performs condensation between the octaketide product of its PKS modules and the amino group of (S,E)-2-aminodec-4-enoic acid which is activated and incorporated by the adenylation domain. The resulting aminoacyl product can be cyclized by the Diels-Alderase PoxQ and reductively released by the reductive (R) domain of poxE to yield an aldehyde intermediate. The released aldehyde is then substrate for a Knoevenagel condensation by the hydrolyase poxO followed by an oxidation at the 5-position of the pyrrolidone ring. The presence of the olefin from the amino acid building block allows for migration of the substituted allyl group to occur. This allylic transposition reaction takes place in a conjugate addition, semipinacol-like fashion to yield a succinimide intermediate. Iterative two-electron oxidations of the C7 methyl of the succinimide intermediate to the carboxylic acid can be catalyzed by one of two remaining cytochrome P450 monooxygenasess poxC or poxD to yield oxaleimide A. Subsequent oxidation yields the maleimide scaffold oxaleimide I. Both oxaleimide A and oxaleimide I can undergo oxidative modifications in the decalin ring to yield the series of products oxaleimides B to H. This is Trans-enoyl reductase poxP from Penicillium oxalicum.